Consider the following 219-residue polypeptide: tRNA (guanine-N(7)-)-methyltransferase (219 aa).

S-adenosyl-L-methionine-binding residues include Asp47, Glu72, Asn99, and Asp125. Asp125 is a catalytic residue. Substrate is bound by residues Lys129 and Asp161.

Belongs to the class I-like SAM-binding methyltransferase superfamily. TrmB family.

The catalysed reaction is guanosine(46) in tRNA + S-adenosyl-L-methionine = N(7)-methylguanosine(46) in tRNA + S-adenosyl-L-homocysteine. Its pathway is tRNA modification; N(7)-methylguanine-tRNA biosynthesis. Its function is as follows. Catalyzes the formation of N(7)-methylguanine at position 46 (m7G46) in tRNA. The polypeptide is tRNA (guanine-N(7)-)-methyltransferase (Nostoc sp. (strain PCC 7120 / SAG 25.82 / UTEX 2576)).